A 497-amino-acid polypeptide reads, in one-letter code: Actin-binding protein WASF2 (497 aa).

Disordered stretches follow at residues 173–203 (KEKRKHRKEKKDNPNRGNVNPRKIKTRKEEW) and 239–436 (ENVD…SDAR). The span at 252 to 263 (SDSASSPSPSFS) shows a compositional bias: low complexity. Pro residues-rich tracts occupy residues 298-335 (SHPPPAPPLSSPPGPKPGFAPPPAPPPPPPMSVPPPLP) and 343-403 (GTPP…PPLP). Positions 435-452 (ARSDLLSAIRQGFQLRRV) constitute a WH2 domain. S473 carries the phosphoserine modification.

The protein belongs to the SCAR/WAVE family. Binds actin and the Arp2/3 complex. Interacts with BAIAP2. Component of the WAVE2 complex composed of ABI1, CYFIP1/SRA1, NCKAP1/NAP1 (NCKAP1l/HEM1 in hematopoietic cells) and WASF2/WAVE2. Directly interacts with BRK1. Interacts with human cytomegalovirus protein UL135. Interacts with FNBP1L (via the SH3 domain).

It is found in the cytoplasm. The protein resides in the cytoskeleton. It localises to the cell projection. Its subcellular location is the lamellipodium. The protein localises to the basolateral cell membrane. Its function is as follows. Downstream effector molecule involved in the transmission of signals from tyrosine kinase receptors and small GTPases to the actin cytoskeleton. Promotes formation of actin filaments. Part of the WAVE complex that regulates lamellipodia formation. The WAVE complex regulates actin filament reorganization via its interaction with the Arp2/3 complex. In Mus musculus (Mouse), this protein is Actin-binding protein WASF2.